A 320-amino-acid chain; its full sequence is Serpentine receptor class gamma-15 (320 aa).

7 helical membrane passes run 29 to 49, 57 to 77, 85 to 105, 151 to 171, 197 to 217, 240 to 260, and 268 to 288; these read TISY…TILV, GSSF…IVFI, FLYV…SSLI, VSLV…IISP, LFQS…TSVT, IYIS…AFCT, and LFTA…VILF.

The protein belongs to the nematode receptor-like protein srg family.

It is found in the membrane. This chain is Serpentine receptor class gamma-15 (srg-15), found in Caenorhabditis elegans.